A 390-amino-acid chain; its full sequence is MKFVDEATILVVAGDGGNGCVSFRREKYIPNGGPDGGDGGDGGDIYLLADENLNTLIDYRFVKSFRAERGENGQSRDCTGKRGKDITIKVPVGTRVLDQGTGEIVGDMTRHGQRLMVAKGGFHGLGNTRFKSSVNRAPRQKTMGTEGETRELMLELLLLADVGMLGLPNAGKSTFIRAVSAAKPKVADYPFTTLIPSLGVVRMDHEQSFVVADIPGLIEGASDGAGLGIRFLKHLERCRVLLHLVDLAPIDESDPVENAKIIINELQQYSENLAQKPRWLVFNKIDLVGPEEAEVRAKAIVEALGWEGKYYMISAANRDNVNALCWDVMNFLNSQPKAMAIAESAPEKVEFMWDDYHREQLAEVEAEAESEDDDDWDEEDDDGVEFIYER.

The region spanning 1 to 159 (MKFVDEATIL…RELMLELLLL (159 aa)) is the Obg domain. The OBG-type G domain occupies 160–333 (ADVGMLGLPN…LCWDVMNFLN (174 aa)). Residues 166 to 173 (GLPNAGKS), 191 to 195 (FTTLI), 213 to 216 (DIPG), 283 to 286 (NKID), and 314 to 316 (SAA) each bind GTP. The Mg(2+) site is built by Ser173 and Thr193. Residues 363–384 (EVEAEAESEDDDDWDEEDDDGV) are compositionally biased toward acidic residues. Positions 363–390 (EVEAEAESEDDDDWDEEDDDGVEFIYER) are disordered.

The protein belongs to the TRAFAC class OBG-HflX-like GTPase superfamily. OBG GTPase family. Monomer. Mg(2+) serves as cofactor.

The protein localises to the cytoplasm. An essential GTPase which binds GTP, GDP and possibly (p)ppGpp with moderate affinity, with high nucleotide exchange rates and a fairly low GTP hydrolysis rate. Plays a role in control of the cell cycle, stress response, ribosome biogenesis and in those bacteria that undergo differentiation, in morphogenesis control. The polypeptide is GTPase Obg (Yersinia enterocolitica serotype O:8 / biotype 1B (strain NCTC 13174 / 8081)).